Consider the following 1606-residue polypeptide: Thrombospondin type-1 domain-containing protein 7B (1606 aa).

Positions 1–31 (MFPKSNLTVTCWVWRSMRKLFLLLSLLLSHA) are cleaved as a signal peptide. The Extracellular segment spans residues 32–1555 (AHLEGKKDNQ…QPLDPDGRVK (1524 aa)). TSP type-1 domains lie at 40-98 (NQFI…RVCD), 102-177 (DLFQ…IPCP), 179-233 (DCVV…ISCP), 336-392 (DCET…IVEG), 399-482 (PRYS…IPCS), 484-543 (DCIV…PMCY), 601-661 (DCVL…HSCM), 662-735 (QLHW…LPCK), 737-796 (DCIV…SLCP), 797-869 (VYRW…VPCR), 871-924 (DCTF…CPCD), 925-998 (EFIS…IPCP), 1000-1125 (DCKL…LMCP), 1127-1181 (ECVM…ENCF), 1182-1245 (QFQY…VECV), 1247-1302 (NCQL…TPCY), 1303-1368 (SWVL…VPCP), and 1370-1431 (DCHL…GKCY). Asn-150, Asn-190, and Asn-219 each carry an N-linked (GlcNAc...) asparagine glycan. Intrachain disulfides connect Cys-411–Cys-477, Cys-431–Cys-481, and Cys-442–Cys-466. 3 cysteine pairs are disulfide-bonded: Cys-602-Cys-643, Cys-613-Cys-617, and Cys-655-Cys-660. The N-linked (GlcNAc...) asparagine glycan is linked to Asn-683. 3 cysteine pairs are disulfide-bonded: Cys-738/Cys-779, Cys-749/Cys-753, and Cys-789/Cys-795. The N-linked (GlcNAc...) asparagine glycan is linked to Asn-757. The N-linked (GlcNAc...) asparagine glycan is linked to Asn-842. 3 cysteine pairs are disulfide-bonded: Cys-872/Cys-907, Cys-883/Cys-887, and Cys-921/Cys-923. Asn-933 carries an N-linked (GlcNAc...) asparagine glycan. Cystine bridges form between Cys-937–Cys-993, Cys-959–Cys-997, Cys-970–Cys-983, Cys-1001–Cys-1038, Cys-1012–Cys-1016, and Cys-1120–Cys-1124. Residue Asn-1186 is glycosylated (N-linked (GlcNAc...) asparagine). 3 disulfides stabilise this stretch: Cys-1248–Cys-1286, Cys-1259–Cys-1263, and Cys-1296–Cys-1301. N-linked (GlcNAc...) asparagine glycosylation occurs at Asn-1308. 3 disulfide bridges follow: Cys-1371–Cys-1415, Cys-1382–Cys-1386, and Cys-1425–Cys-1430. Asn-1456 and Asn-1524 each carry an N-linked (GlcNAc...) asparagine glycan. The helical transmembrane segment at 1556–1576 (IWVYGVSGGAFLIMIFLIFTS) threads the bilayer. The Cytoplasmic segment spans residues 1577–1606 (YLVCKKPKPHQSTPPQQKPLTLAYDGDLDM). The disordered stretch occupies residues 1583–1606 (PKPHQSTPPQQKPLTLAYDGDLDM). A compositionally biased stretch (polar residues) spans 1586 to 1595 (HQSTPPQQKP).

The protein resides in the membrane. In Homo sapiens (Human), this protein is Thrombospondin type-1 domain-containing protein 7B.